A 290-amino-acid polypeptide reads, in one-letter code: Type II secretion system protein C (290 aa).

Topologically, residues 1 to 28 (MTLPFRDDLLSSLLARCKTVPLSRFSQP) are cytoplasmic. A helical membrane pass occupies residues 29–46 (LFWLLLLLLAHQCAGLTW). Residues 47–290 (RLLDLGSQQS…LYDVYVGLSE (244 aa)) lie on the Periplasmic side of the membrane.

The protein belongs to the GSP C family.

The protein localises to the cell inner membrane. Functionally, involved in a type II secretion system (T2SS, formerly general secretion pathway, GSP) for the export of proteins. The sequence is that of Type II secretion system protein C (exeC) from Aeromonas salmonicida.